Reading from the N-terminus, the 572-residue chain is uncharacterized protein (572 aa).

The tract at residues 13–45 (ALIAKPKGKTVSGDGADPKKRGRPKKNATEPAV) is disordered. A coiled-coil region spans residues 177 to 204 (VLTKEMEEKLEALDRDMRTAEETKVSIA).

This is an uncharacterized protein from Dryophytes versicolor (chameleon treefrog).